Consider the following 264-residue polypeptide: Hydroxyethylthiazole kinase (264 aa).

Met47 serves as a coordination point for substrate. The ATP site is built by Arg123 and Ser169. Substrate is bound at residue Gly196.

It belongs to the Thz kinase family. Requires Mg(2+) as cofactor.

The catalysed reaction is 5-(2-hydroxyethyl)-4-methylthiazole + ATP = 4-methyl-5-(2-phosphooxyethyl)-thiazole + ADP + H(+). Its pathway is cofactor biosynthesis; thiamine diphosphate biosynthesis; 4-methyl-5-(2-phosphoethyl)-thiazole from 5-(2-hydroxyethyl)-4-methylthiazole: step 1/1. Catalyzes the phosphorylation of the hydroxyl group of 4-methyl-5-beta-hydroxyethylthiazole (THZ). This Brachyspira hyodysenteriae (strain ATCC 49526 / WA1) protein is Hydroxyethylthiazole kinase.